The primary structure comprises 194 residues: uncharacterized protein (194 aa).

Residues 2 to 62 (QGPRERMVVS…CEAVDYAGEH (61 aa)) form the HTH tetR-type domain. The H-T-H motif DNA-binding region spans 25–44 (AISDVLQHSGAPRGSAYHYF).

This is an uncharacterized protein from Mycobacterium tuberculosis (strain CDC 1551 / Oshkosh).